A 300-amino-acid chain; its full sequence is Beta-lactamase (300 aa).

A signal peptide spans 1–29; it reads MTMFKTTFRQTATIAVSLISLLVSPMLWA. Ser75 serves as the catalytic Acyl-ester intermediate. Position 239–241 (239–241) interacts with substrate; that stretch reads KTG.

The protein belongs to the class-A beta-lactamase family. Monomer.

The enzyme catalyses a beta-lactam + H2O = a substituted beta-amino acid. In terms of biological role, hydrolyzes broad-spectrum beta-lactam antibiotics. Active against cephalosporins such as cefuroxime and cefotaxime. The protein is Beta-lactamase (blaB) of Proteus vulgaris.